The primary structure comprises 341 residues: DNA-directed RNA polymerase subunit alpha (341 aa).

The tract at residues 1–237 (MLSLSKNWNA…EQLQLFISFE (237 aa)) is alpha N-terminal domain (alpha-NTD). The interval 252 to 341 (FSPYLLKRVD…LSKRYEDSYN (90 aa)) is alpha C-terminal domain (alpha-CTD).

The protein belongs to the RNA polymerase alpha chain family. As to quaternary structure, homodimer. The RNAP catalytic core consists of 2 alpha, 1 beta, 1 beta' and 1 omega subunit. When a sigma factor is associated with the core the holoenzyme is formed, which can initiate transcription.

The enzyme catalyses RNA(n) + a ribonucleoside 5'-triphosphate = RNA(n+1) + diphosphate. Functionally, DNA-dependent RNA polymerase catalyzes the transcription of DNA into RNA using the four ribonucleoside triphosphates as substrates. The sequence is that of DNA-directed RNA polymerase subunit alpha from Rickettsia bellii (strain OSU 85-389).